Here is a 609-residue protein sequence, read N- to C-terminus: MCGIVGAIAQRDVAEILLEGLRRLEYRGYDSAGLAVVDAEGHMTRLRRLGKVQMLAQAAEEHPLHGGTGIAHTRWATHGEPSEANAHPHVSEHIVVVHNGIIENHEPLREELKARGYTFVSETDTEVIAHLVNWELKQGGTLREAVLRAIPQLRGAYGTVIMDSRHPDTLLAARSGSPLVIGLGMGENFIASDQLALLPVTRRFIFLEEGDIAEITRRSVNIFDKTGAEVKRQDIESNLQYDAGDKGIYRHYMQKEIYEQPNAIKNTLTGRISHGQVDLSELGPNADELLSKVEHIQILACGTSYNSGMVSRYWFESLAGIPCDVEIASEFRYRKSAVRRNSLMITLSQSGETADTLAGLRLSKELGYLGSLAICNVPGSSLVRESDLALMTNAGTEIGVASTKAFTTQLTVLLMLVAKLSRLKGLDASIEHDIVHGLQALPSRIEQMLSQDKRIEALAEDFSDKHHALFLGRGDQYPIALEGALKLKEISYIHAEAYAAGELKHGPLALIDADMPVIVVAPNNELLEKLKSNIEEVRARGGQLYVFADQDAGFVSSDNMHIIEMPHVEEVIAPIFYTVPLQLLAYHVALIKGTDVDQPRNLAKSVTVE.

Cys-2 functions as the Nucleophile; for GATase activity in the catalytic mechanism. Residues 2–218 (CGIVGAIAQR…EGDIAEITRR (217 aa)) form the Glutamine amidotransferase type-2 domain. 2 consecutive SIS domains span residues 286–426 (ADEL…LKGL) and 458–599 (LAED…VDQP). The active-site For Fru-6P isomerization activity is the Lys-604.

Homodimer.

It is found in the cytoplasm. The catalysed reaction is D-fructose 6-phosphate + L-glutamine = D-glucosamine 6-phosphate + L-glutamate. Functionally, catalyzes the first step in hexosamine metabolism, converting fructose-6P into glucosamine-6P using glutamine as a nitrogen source. In Shigella flexneri, this protein is Glutamine--fructose-6-phosphate aminotransferase [isomerizing].